We begin with the raw amino-acid sequence, 1261 residues long: ABC-type transmembrane transporter verA (1261 aa).

Residues 41–61 (IGCAFAAVCSGAAMPLMALIL) traverse the membrane as a helical segment. The ABC transmembrane type-1 1 domain maps to 41 to 334 (IGCAFAAVCS…LGPNMPSFIK (294 aa)). Asn-67 carries an N-linked (GlcNAc...) asparagine glycan. 5 consecutive transmembrane segments (helical) span residues 92 to 112 (LWFVYLFIGKFTLVYLWSFGF), 166 to 186 (LGIMIQAFSMLLASFAVAFSQ), 190 to 210 (LTLVMLGLVIITLGLIGFIVS), 270 to 290 (FVGLMFACQYFFMFVGWAIGF), and 308 to 328 (ILSVFFAMLIGLGAIMALGPN). Residues 374 to 618 (VELRDMSFAY…GGLYKRLYDA (245 aa)) form the ABC transporter 1 domain. Asn-396 is a glycosylation site (N-linked (GlcNAc...) asparagine). 409–416 (GPSGAGKS) provides a ligand contact to ATP. Asn-463 carries N-linked (GlcNAc...) asparagine glycosylation. 6 helical membrane passes run 686–706 (YWPIFLIGLVACVVTAQIFPV), 734–754 (LMFFVVGLGAMISYAILGFFM), 808–828 (MGLLISIFVSVISASIIGLAY), 830–850 (WKFALVAIFAAMPAVFAAGYL), 913–933 (VMTLFFAFSESVELLASALGF), and 950–970 (FFTVFIAVVVGGQAAGALFGF). The 286-residue stretch at 691–976 (LIGLVACVVT…LFGFSSNLGK (286 aa)) folds into the ABC transmembrane type-1 2 domain. 2 N-linked (GlcNAc...) asparagine glycosylation sites follow: Asn-1007 and Asn-1021. The ABC transporter 2 domain occupies 1017–1255 (VDMQNVTFAY…QGNYFKMHES (239 aa)). 1052-1059 (GTSGSGKS) is a binding site for ATP. The N-linked (GlcNAc...) asparagine glycan is linked to Asn-1106.

It belongs to the ABC transporter superfamily. ABCB family. Multidrug resistance exporter (TC 3.A.1.201) subfamily.

Its subcellular location is the cell membrane. In terms of biological role, ABC-type transmembrane transporter; part of the gene cluster that mediates the biosynthesis of 11'-deoxyverticillin A, one of the dimeric epipolythiodioxopiperazines (ETPs) from the verticillin family that are toxic secondary metabolites. The verA multidrug transporter is probably involved in the secretion of 11'-deoxyverticillin A. This is ABC-type transmembrane transporter verA from Clonostachys rogersoniana.